A 327-amino-acid polypeptide reads, in one-letter code: Small ribosomal subunit protein uS2 (327 aa).

The segment at 258–327 (AGHTPVSETL…PGVADGAALE (70 aa)) is disordered.

It belongs to the universal ribosomal protein uS2 family.

The chain is Small ribosomal subunit protein uS2 from Anaplasma marginale (strain St. Maries).